The primary structure comprises 189 residues: Large ribosomal subunit protein bL9 (189 aa).

It belongs to the bacterial ribosomal protein bL9 family.

Functionally, binds to the 23S rRNA. The protein is Large ribosomal subunit protein bL9 of Brucella ovis (strain ATCC 25840 / 63/290 / NCTC 10512).